A 419-amino-acid chain; its full sequence is Tubby-like protein 4 (419 aa).

A disordered region spans residues 1 to 96 (MAATKREPLR…EREEEEEGSS (96 aa)). Basic and acidic residues predominate over residues 33–57 (AKEKEKENEVPTEIGRGKDGGEKKP).

This sequence belongs to the TUB family.

In Oryza sativa subsp. japonica (Rice), this protein is Tubby-like protein 4 (TULP4).